We begin with the raw amino-acid sequence, 181 residues long: Putative adenylate kinase (181 aa).

Residues G10, G12, K13, S14, and T15 each coordinate ATP. Residues 35–58 form an NMP region; the sequence is NITEVVSKNGLYLEKDIEMDSYVV. Residues 106–116 are LID; sequence SRNYSSEKVKE. R107 and K147 together coordinate ATP.

It belongs to the adenylate kinase family. AK6 subfamily. In terms of assembly, interacts with uS11. Not a structural component of 40S pre-ribosomes, but transiently interacts with them by binding to uS11.

It catalyses the reaction AMP + ATP = 2 ADP. The enzyme catalyses ATP + H2O = ADP + phosphate + H(+). Functionally, broad-specificity nucleoside monophosphate (NMP) kinase that catalyzes the reversible transfer of the terminal phosphate group between nucleoside triphosphates and monophosphates. Also has ATPase activity. Involved in the late maturation steps of the 30S ribosomal particles, specifically 16S rRNA maturation. While NMP activity is not required for ribosome maturation, ATPase activity is. Associates transiently with small ribosomal subunit protein uS11. ATP hydrolysis breaks the interaction with uS11. May temporarily remove uS11 from the ribosome to enable a conformational change of the ribosomal RNA that is needed for the final maturation step of the small ribosomal subunit. This Methanococcus maripaludis (strain C7 / ATCC BAA-1331) protein is Putative adenylate kinase.